A 421-amino-acid polypeptide reads, in one-letter code: Lipid II:glycine glycyltransferase (421 aa).

This sequence belongs to the FemABX family. As to quaternary structure, monomer.

The protein resides in the cytoplasm. It carries out the reaction beta-D-GlcNAc-(1-&gt;4)-Mur2Ac(oyl-L-Ala-D-isoglutaminyl-L-Lys-D-Ala-D-Ala)-di-trans,octa-cis-undecaprenyl diphosphate + glycyl-tRNA(Gly) = beta-D-GlcNAc-(1-&gt;4)-Mur2Ac(oyl-L-Ala-D-isoglutaminyl-L-Lys-(N(6)-Gly)-D-Ala-D-Ala)-di-trans,octa-cis-undecaprenyl diphosphate + tRNA(Gly) + H(+). Functionally, catalyzes the incorporation of the first glycine of the pentaglycine interpeptide bridge, which is characteristic of the S.aureus peptidoglycan. This glycine is added to the epsilon-amino group of the L-lysine of the membrane-bound lipid II intermediate (GlcNAc-(beta-1,4)-N-acetylmuramic acid(-L-Ala-D-iGln-L-Lys-D-Ala-D-Ala)-pyrophosphoryl-undecaprenol), using glycyl-tRNA(Gly) as donor, in a ribosome-independent mechanism. Involved in methicillin resistance. The polypeptide is Lipid II:glycine glycyltransferase (femX) (Staphylococcus aureus (strain USA300)).